The primary structure comprises 52 residues: Lantibiotic gallidermin (52 aa).

Residues 1 to 30 constitute a propeptide that is removed on maturation; sequence MEAVKEKNELFDLDVKVNAKESNDSGAEPR. Residues 33–37 constitute a cross-link (lanthionine (Ser-Cys)); the sequence is SKFLC. The beta-methyllanthionine (Thr-Cys) cross-link spans 38 to 41; that stretch reads TPGC. Threonine 44 is modified ((Z)-2,3-didehydrobutyrine). A cross-link (lanthionine (Ser-Cys)) is located at residues 46-51; that stretch reads SFNSYC. A cross-link (S-(2-aminovinyl)-D-cysteine (Ser-Cys)) is located at residues 49–52; it reads SYCC.

Belongs to the type A lantibiotic family. In terms of processing, maturation of lantibiotics involves the enzymatic conversion of Thr, and Ser into dehydrated AA and the formation of thioether bonds with cysteine. The C-terminal lanthionine undergoes decarboxylation. This is followed by membrane translocation and cleavage of the modified precursor. Post-translationally, the structure of the 2,3-didehydrobutyrine is not discussed in PubMed:1932575. However, in Fig. 5 the NMR model appears to have the Z-isomer.

In terms of biological role, lanthionine-containing peptide antibiotic (lantibiotic) active on Gram-positive bacteria. The bactericidal activity of lantibiotics is based on depolarization of energized bacterial cytoplasmic membranes, initiated by the formation of aqueous transmembrane pores. The chain is Lantibiotic gallidermin (gdmA) from Staphylococcus gallinarum.